Reading from the N-terminus, the 682-residue chain is Penicillin-binding protein activator LpoA (682 aa).

The signal sequence occupies residues 1–26; the sequence is MLSSITVRTKSGRLIPLVLAATLLAA. Residue Cys27 is the site of N-palmitoyl cysteine attachment. The S-diacylglycerol cysteine moiety is linked to residue Cys27.

It belongs to the LpoA family. In terms of assembly, interacts with PBP1a.

It is found in the cell outer membrane. In terms of biological role, regulator of peptidoglycan synthesis that is essential for the function of penicillin-binding protein 1A (PBP1a). The chain is Penicillin-binding protein activator LpoA from Edwardsiella ictaluri (strain 93-146).